The sequence spans 124 residues: Small ribosomal subunit protein uS13 (124 aa).

The interval 99–124 is disordered; it reads RGQRTRTNARTRKGPRKTVGVMRKKS. A compositionally biased stretch (basic residues) spans 101–124; the sequence is QRTRTNARTRKGPRKTVGVMRKKS.

The protein belongs to the universal ribosomal protein uS13 family. Part of the 30S ribosomal subunit. Forms a loose heterodimer with protein S19. Forms two bridges to the 50S subunit in the 70S ribosome.

Its function is as follows. Located at the top of the head of the 30S subunit, it contacts several helices of the 16S rRNA. In the 70S ribosome it contacts the 23S rRNA (bridge B1a) and protein L5 of the 50S subunit (bridge B1b), connecting the 2 subunits; these bridges are implicated in subunit movement. Contacts the tRNAs in the A and P-sites. This is Small ribosomal subunit protein uS13 from Caldicellulosiruptor bescii (strain ATCC BAA-1888 / DSM 6725 / KCTC 15123 / Z-1320) (Anaerocellum thermophilum).